The following is a 200-amino-acid chain: Nucleoplasmin (200 aa).

Alanine 2 is subject to N-acetylalanine. At serine 3 the chain carries Phosphoserine. A Phosphothreonine modification is found at threonine 4. At serine 6 the chain carries Phosphoserine. Threonine 8 is subject to Phosphothreonine. The interval 35–39 is acidic tract A1; that stretch reads EDDEE. Residues 123-148 show a composition bias toward acidic residues; sequence DYSWAEEEDEGEAEGEEEEEEEEDQE. A disordered region spans residues 123-200; the sequence is DYSWAEEEDE…GRGRKPAAKK (78 aa). Residues 128–148 form an acidic tract A2 region; it reads EEEDEGEAEGEEEEEEEEDQE. Residue serine 149 is modified to Phosphoserine. Residues 153–170 show a composition bias toward basic residues; that stretch reads AVKRPAATKKAGQAKKKK. Positions 155–170 match the Bipartite nuclear localization signal motif; the sequence is KRPAATKKAGQAKKKK. The tract at residues 174-176 is acidic tract A3; the sequence is EDE. Phosphoserine is present on residues serine 177, serine 178, and serine 182. Residues 185–200 are compositionally biased toward basic residues; it reads KKGKGAGRGRKPAAKK. Residue arginine 192 is modified to Omega-N-methylarginine; by PRMT5; alternate. Arginine 192 carries the post-translational modification Symmetric dimethylarginine; by PRMT5; alternate.

It belongs to the nucleoplasmin family. Homopentamer, when bound to H2A-H2B dimers only. Homodecamer of two stacked pentamers, when bound to H2A-H2B dimers and H3-H4 tetramers simultaneously. Interacts with the heterotetramer formed by wdr77 and prmt5. In terms of processing, activated by phosphorylation of multiple serine/threonine residues, along both core and tail domains. The level of phosphorylation gradually increases during egg maturation, reaching an average of 7-10 phosphates per monomer, so that at the time of fertilization the activity of the protein is maximum. Methylated by prmt5, yielding both monomethylated and symmetrically dimethylated Arg-192.

The protein resides in the nucleus. Functionally, acts as a chaperone for histones, such as histone H2A-H2B, and thus regulates the assembly of nucleosome cores. Involved in chromatin remodeling, especially during fertilization and early embryonic development. May be involved in sperm chromatin decondensation during fertilization. This chain is Nucleoplasmin, found in Xenopus laevis (African clawed frog).